Reading from the N-terminus, the 932-residue chain is LPS-assembly protein LptD (932 aa).

An N-terminal signal peptide occupies residues 1–33 (MALKSPAFRRKFPLLVTGGLLALQPLATSYAVA). The segment at 54–87 (PVNNLPPRPVHEGAAVSSGTEAASEGETADRPML) is disordered.

It belongs to the LptD family. Component of the lipopolysaccharide transport and assembly complex. Interacts with LptE and LptA.

The protein localises to the cell outer membrane. In terms of biological role, together with LptE, is involved in the assembly of lipopolysaccharide (LPS) at the surface of the outer membrane. The polypeptide is LPS-assembly protein LptD (Pseudomonas putida (strain GB-1)).